Reading from the N-terminus, the 376-residue chain is Putative dihydroorotase (376 aa).

Residues histidine 35 and histidine 37 each contribute to the Zn(2+) site. Residues 37–39 (HVR) and asparagine 66 contribute to the substrate site. The Zn(2+) site is built by aspartate 114, histidine 138, and histidine 187. Substrate is bound at residue asparagine 230. Aspartate 257 is a binding site for Zn(2+). Aspartate 257 is a catalytic residue. Substrate-binding positions include histidine 261 and 273–274 (YG).

The protein belongs to the metallo-dependent hydrolases superfamily. DHOase family. Class I DHOase subfamily. Zn(2+) serves as cofactor.

The catalysed reaction is (S)-dihydroorotate + H2O = N-carbamoyl-L-aspartate + H(+). It participates in pyrimidine metabolism; UMP biosynthesis via de novo pathway; (S)-dihydroorotate from bicarbonate: step 3/3. In terms of biological role, catalyzes the reversible cyclization of carbamoyl aspartate to dihydroorotate. This is Putative dihydroorotase (pyrC) from Thermotoga maritima (strain ATCC 43589 / DSM 3109 / JCM 10099 / NBRC 100826 / MSB8).